Here is an 852-residue protein sequence, read N- to C-terminus: MRDFVIVFGSSSAITNPHHHHRRCYATAPESNRKTKSNSSFTKLLPSLPQQHSPSPASVSATHSLSSHFSNVVRWIPDGSLEYYADFASKLAEDGRIEDVALIAETLAAESGANVARFASMVDYDLLSKGISSNLRQGKIESVVYTLKRIEKVGIAPLDLVDDSSVKLMRKQFRAMANSVQVEKAIDLMEILAGLGFKIKELVDPFDVVKSCVEISNPQLAIRYACLLPHTELLLCRIIHGFGKKGDMVSVMTAYEACKQILDTPNMYICRTMIDVCGLCGDYVKSRYIYEDLLKENIKPNIYVINSLMNVNSHDLGYTLKVYKNMQILDVTADMTSYNILLKTCCLAGRVDLAQDIYKEAKRMESSGLLKLDAFTYCTIIKVFADAKMWKWALKVKDDMKSVGVTPNTHTWSSLISACANAGLVEQANHLFEEMLASGCEPNSQCFNILLHACVEACQYDRAFRLFQSWKGSSVNESLYADDIVSKGRTSSPNILKNNGPGSLVNRNSNSPYIQASKRFCFKPTTATYNILLKACGTDYYRGKELMDEMKSLGLSPNQITWSTLIDMCGGSGDVEGAVRILRTMHSAGTRPDVVAYTTAIKICAENKCLKLAFSLFEEMRRYQIKPNWVTYNTLLKARSKYGSLLEVRQCLAIYQDMRNAGYKPNDHFLKELIEEWCEGVIQENGQSQDKISDQEGDNAGRPVSLLIEKVATHMQERTAGNLAIDLQGLTKIEARLVVLAVLRMIKEDYMRGDVVIDDVLIIIGTDEANTVSGKQEITVQEALVKLLRDELSLVVLPAGQRNIIQDAHCVDDADQENTKSFVSISSTRRPAILERLMVTKASLYQWLQRRK.

A chloroplast-targeting transit peptide spans 1–25 (MRDFVIVFGSSSAITNPHHHHRRCY). The segment at 17–60 (PHHHHRRCYATAPESNRKTKSNSSFTKLLPSLPQQHSPSPASVS) is disordered. Residues 44-58 (LLPSLPQQHSPSPAS) show a composition bias toward low complexity. PPR repeat units follow at residues 334–364 (DMTSYNILLKTCCLAGRVDLAQDIYKEAKRM), 373–407 (DAFTYCTIIKVFADAKMWKWALKVKDDMKSVGVTP), 408–442 (NTHTWSSLISACANAGLVEQANHLFEEMLASGCEP), 443–477 (NSQCFNILLHACVEACQYDRAFRLFQSWKGSSVNE), 525–557 (TTATYNILLKACGTDYYRGKELMDEMKSLGLSP), 558–592 (NQITWSTLIDMCGGSGDVEGAVRILRTMHSAGTRP), 593–627 (DVVAYTTAIKICAENKCLKLAFSLFEEMRRYQIKP), and 628–665 (NWVTYNTLLKARSKYGSLLEVRQCLAIYQDMRNAGYKP).

This sequence belongs to the PPR family. P subfamily.

The protein resides in the plastid. It localises to the chloroplast. The protein is Pentatricopeptide repeat-containing protein At5g02830, chloroplastic of Arabidopsis thaliana (Mouse-ear cress).